Consider the following 313-residue polypeptide: Homoserine O-succinyltransferase (313 aa).

The active-site Acyl-thioester intermediate is the cysteine 142. The substrate site is built by lysine 163 and serine 192. Residue histidine 235 is the Proton acceptor of the active site. Glutamate 237 is an active-site residue. Arginine 249 contacts substrate.

Belongs to the MetA family.

The protein localises to the cytoplasm. The enzyme catalyses L-homoserine + succinyl-CoA = O-succinyl-L-homoserine + CoA. The protein operates within amino-acid biosynthesis; L-methionine biosynthesis via de novo pathway; O-succinyl-L-homoserine from L-homoserine: step 1/1. In terms of biological role, transfers a succinyl group from succinyl-CoA to L-homoserine, forming succinyl-L-homoserine. This is Homoserine O-succinyltransferase from Shewanella baltica (strain OS223).